A 246-amino-acid polypeptide reads, in one-letter code: Endonuclease NucS (246 aa).

This sequence belongs to the NucS endonuclease family.

The protein resides in the cytoplasm. Cleaves both 3' and 5' ssDNA extremities of branched DNA structures. This Corynebacterium urealyticum (strain ATCC 43042 / DSM 7109) protein is Endonuclease NucS.